The primary structure comprises 133 residues: ATP synthase epsilon chain, chloroplastic (133 aa).

The protein belongs to the ATPase epsilon chain family. F-type ATPases have 2 components, CF(1) - the catalytic core - and CF(0) - the membrane proton channel. CF(1) has five subunits: alpha(3), beta(3), gamma(1), delta(1), epsilon(1). CF(0) has three main subunits: a, b and c.

The protein resides in the plastid. Its subcellular location is the chloroplast thylakoid membrane. In terms of biological role, produces ATP from ADP in the presence of a proton gradient across the membrane. This Lotus japonicus (Lotus corniculatus var. japonicus) protein is ATP synthase epsilon chain, chloroplastic.